A 561-amino-acid chain; its full sequence is Methyl-accepting chemotaxis protein CtpM (561 aa).

Residues M1 to L11 lie on the Cytoplasmic side of the membrane. A helical membrane pass occupies residues L12 to I32. At L33–T205 the chain is on the periplasmic side. A helical transmembrane segment spans residues L206 to L226. At A227 to I561 the chain is on the cytoplasmic side. Positions N230–R284 constitute an HAMP domain. The Methyl-accepting transducer domain occupies M289–A525. The segment at H333–K357 is disordered. Residues A336–Q348 show a composition bias toward low complexity.

It belongs to the methyl-accepting chemotaxis (MCP) protein family. In terms of assembly, homodimer. The ligand-binding domain (LBD) is dimeric in the presence and the absence of ligands.

It is found in the cell inner membrane. Chemotactic-signal transducers respond to changes in the concentration of attractants and repellents in the environment, transduce a signal from the outside to the inside of the cell, and facilitate sensory adaptation through the variation of the level of methylation. Directly recognizes five C4-dicarboxylic acids: L-malic, citramalic, citraconic, bromosuccinic and methylsuccinic acids. Three of the identified ligands act as chemoattractants (L-malic, D,L-bromosuccinic and L-citramalic acids) whereas two of them (L-methylsuccinic and citraconic acids) behave as antagonists by inhibiting the downstream chemotaxis signaling cascade. Antagonists compete with chemoattractants, thereby decreasing the affinity for chemoattractants and the subsequent chemotactic response. Acts through the che chemosensory pathway. The protein is Methyl-accepting chemotaxis protein CtpM of Pseudomonas aeruginosa (strain ATCC 15692 / DSM 22644 / CIP 104116 / JCM 14847 / LMG 12228 / 1C / PRS 101 / PAO1).